Consider the following 308-residue polypeptide: Ribonuclease Z (308 aa).

H60, H62, D64, H65, H140, D209, and H269 together coordinate Zn(2+). The active-site Proton acceptor is D64.

It belongs to the RNase Z family. Homodimer. Zn(2+) serves as cofactor.

It catalyses the reaction Endonucleolytic cleavage of RNA, removing extra 3' nucleotides from tRNA precursor, generating 3' termini of tRNAs. A 3'-hydroxy group is left at the tRNA terminus and a 5'-phosphoryl group is left at the trailer molecule.. In terms of biological role, zinc phosphodiesterase, which displays some tRNA 3'-processing endonuclease activity. Probably involved in tRNA maturation, by removing a 3'-trailer from precursor tRNA. This chain is Ribonuclease Z, found in Methanococcus maripaludis (strain C6 / ATCC BAA-1332).